The sequence spans 78 residues: UPF0335 protein RBE_1185 (78 aa).

It belongs to the UPF0335 family.

This chain is UPF0335 protein RBE_1185, found in Rickettsia bellii (strain RML369-C).